A 1020-amino-acid chain; its full sequence is Sodium/potassium-transporting ATPase subunit alpha-2 (1020 aa).

The propeptide occupies 1-5 (MGRGA). The disordered stretch occupies residues 1 to 31 (MGRGAGREYSPAATTAENGGGKKKQKEKELD). The Cytoplasmic portion of the chain corresponds to 6–85 (GREYSPAATT…NALTPPPTTP (80 aa)). Phosphoserine is present on Ser10. An interaction with phosphoinositide-3 kinase region spans residues 80-82 (PPP). The chain crosses the membrane as a helical span at residues 86–106 (EWVKFCRQLFGGFSILLWIGA). The Extracellular portion of the chain corresponds to 107-129 (ILCFLAYGIQAAMEDEPSNDNLY). A helical membrane pass occupies residues 130–150 (LGVVLAAVVIVTGCFSYYQEA). The Cytoplasmic segment spans residues 151-286 (KSSKIMDSFK…VGRTPIAMEI (136 aa)). Over residues 212-227 (DNSSLTGESEPQTRSP) the composition is skewed to polar residues. Residues 212-231 (DNSSLTGESEPQTRSPEFTH) are disordered. Residues 287–306 (EHFIQLITGVAVFLGVSFFV) form a helical membrane-spanning segment. Residues 307-318 (LSLILGYSWLEA) lie on the Extracellular side of the membrane. The chain crosses the membrane as a helical span at residues 319-336 (VIFLIGIIVANVPEGLLA). Over 337–769 (TVTVCLTLTA…EEGRLIFDNL (433 aa)) the chain is Cytoplasmic. Asp374 acts as the 4-aspartylphosphate intermediate in catalysis. Residues Ser439, Ser450, Ser496, and Ser559 each carry the phosphoserine modification. Thr570 is subject to Phosphothreonine. Phosphoserine is present on residues Ser587 and Ser672. Residues Asp714 and Asp718 each coordinate Mg(2+). Residues 770–789 (KKSIAYTLTSNIPEITPFLL) traverse the membrane as a helical segment. The Extracellular segment spans residues 790–799 (FIIANIPLPL). Residues 800-820 (GTVTILCIDLGTDMVPAISLA) traverse the membrane as a helical segment. The Cytoplasmic portion of the chain corresponds to 821 to 840 (YEAAESDIMKRQPRNSQTDK). Position 826 is a phosphoserine (Ser826). A helical membrane pass occupies residues 841-863 (LVNERLISMAYGQIGMIQALGGF). At 864–915 (FTYFVILAENGFLPSRLLGIRLDWDDRTMNDLEDSYGQEWTYEQRKVVEFTC) the chain is on the extracellular side. A helical membrane pass occupies residues 916 to 935 (HTAFFASIVVVQWADLIICK). At 936–948 (TRRNSVFQQGMKN) the chain is on the cytoplasmic side. Residue Ser940 is modified to Phosphoserine; by PKA. A helical membrane pass occupies residues 949 to 967 (KILIFGLLEETALAAFLSY). Over 968-982 (CPGMGVALRMYPLKV) the chain is Extracellular. The chain crosses the membrane as a helical span at residues 983 to 1003 (TWWFCAFPYSLLIFIYDEVRK). At 1004–1020 (LILRRYPGGWVEKETYY) the chain is on the cytoplasmic side.

The protein belongs to the cation transport ATPase (P-type) (TC 3.A.3) family. Type IIC subfamily. In terms of assembly, the sodium/potassium-transporting ATPase is composed of a catalytic alpha subunit, an auxiliary non-catalytic beta subunit and an additional regulatory subunit. Interacts with regulatory subunit FXYD1.

The protein resides in the membrane. It is found in the cell membrane. It carries out the reaction K(+)(out) + Na(+)(in) + ATP + H2O = K(+)(in) + Na(+)(out) + ADP + phosphate + H(+). This is the catalytic component of the active enzyme, which catalyzes the hydrolysis of ATP coupled with the exchange of sodium and potassium ions across the plasma membrane. This action creates the electrochemical gradient of sodium and potassium, providing the energy for active transport of various nutrients. The sequence is that of Sodium/potassium-transporting ATPase subunit alpha-2 (ATP1A2) from Homo sapiens (Human).